The primary structure comprises 445 residues: Tubulin beta chain (445 aa).

Residues glutamine 11, glutamate 69, serine 138, glycine 142, threonine 143, glycine 144, asparagine 205, and asparagine 227 each coordinate GTP. Position 69 (glutamate 69) interacts with Mg(2+).

Belongs to the tubulin family. As to quaternary structure, dimer of alpha and beta chains. A typical microtubule is a hollow water-filled tube with an outer diameter of 25 nm and an inner diameter of 15 nM. Alpha-beta heterodimers associate head-to-tail to form protofilaments running lengthwise along the microtubule wall with the beta-tubulin subunit facing the microtubule plus end conferring a structural polarity. Microtubules usually have 13 protofilaments but different protofilament numbers can be found in some organisms and specialized cells. It depends on Mg(2+) as a cofactor.

Its subcellular location is the cytoplasm. It localises to the cytoskeleton. In terms of biological role, tubulin is the major constituent of microtubules, a cylinder consisting of laterally associated linear protofilaments composed of alpha- and beta-tubulin heterodimers. Microtubules grow by the addition of GTP-tubulin dimers to the microtubule end, where a stabilizing cap forms. Below the cap, tubulin dimers are in GDP-bound state, owing to GTPase activity of alpha-tubulin. This chain is Tubulin beta chain (TUB2), found in Ajellomyces capsulatus (Darling's disease fungus).